Reading from the N-terminus, the 396-residue chain is RNA polymerase principal sigma factor HrdA (396 aa).

A compositionally biased stretch (basic residues) spans 1–20 (MRGGQRRASRLRPPTYRRRP). The segment at 1-96 (MRGGQRRASR…PTRTESGGPS (96 aa)) is disordered. Low complexity-rich tracts occupy residues 33-42 (QTQTLTQTDT) and 56-75 (LLAM…PGAP). The short motif at 187–200 (DLVQEGNLGLIRAV) is the Polymerase core binding element. The segment at residues 357-376 (LEEIGRLFGVTRERIRQIES) is a DNA-binding region (H-T-H motif).

The protein belongs to the sigma-70 factor family. Interacts transiently with the RNA polymerase catalytic core. Interacts with RNA polymerase-binding protein RbpA.

Functionally, sigma factors are initiation factors that promote the attachment of RNA polymerase to specific initiation sites and are then released. The polypeptide is RNA polymerase principal sigma factor HrdA (hrdA) (Streptomyces coelicolor (strain ATCC BAA-471 / A3(2) / M145)).